Consider the following 226-residue polypeptide: Pre-mRNA-splicing factor SPF27 (226 aa).

An N-acetylalanine modification is found at alanine 2. Serine 94 carries the post-translational modification Phosphoserine. Residues 139-223 adopt a coiled-coil conformation; sequence YNENLVHMIE…HGEANKENIR (85 aa).

It belongs to the SPF27 family. Component of the pre-catalytic and catalytic spliceosome complexes. Component of the postcatalytic spliceosome P complex. Component of the PRP19-CDC5L splicing complex composed of a core complex comprising a homotetramer of PRPF19, CDC5L, PLRG1 and BCAS2, and at least three less stably associated proteins CTNNBL1, CWC15 and HSPA8. Interacts directly in the complex with PRPF19, CDC5L and PLRG1.

It localises to the nucleus. The protein resides in the nucleolus. Its function is as follows. Required for pre-mRNA splicing as component of the activated spliceosome. Component of the PRP19-CDC5L complex that forms an integral part of the spliceosome and is required for activating pre-mRNA splicing. May have a scaffolding role in the spliceosome assembly as it contacts all other components of the core complex. The PRP19-CDC5L complex may also play a role in the response to DNA damage (DDR). This is Pre-mRNA-splicing factor SPF27 (BCAS2) from Pongo abelii (Sumatran orangutan).